The chain runs to 251 residues: Triosephosphate isomerase (251 aa).

Asn-9–Lys-11 contacts substrate. The Electrophile role is filled by His-94. The active-site Proton acceptor is the Glu-166. Substrate is bound by residues Gly-172, Ser-211, and Gly-232–Gly-233.

The protein belongs to the triosephosphate isomerase family. Homodimer.

The protein localises to the cytoplasm. It carries out the reaction D-glyceraldehyde 3-phosphate = dihydroxyacetone phosphate. Its pathway is carbohydrate biosynthesis; gluconeogenesis. It participates in carbohydrate degradation; glycolysis; D-glyceraldehyde 3-phosphate from glycerone phosphate: step 1/1. Functionally, involved in the gluconeogenesis. Catalyzes stereospecifically the conversion of dihydroxyacetone phosphate (DHAP) to D-glyceraldehyde-3-phosphate (G3P). The protein is Triosephosphate isomerase of Xanthomonas campestris pv. campestris (strain 8004).